We begin with the raw amino-acid sequence, 283 residues long: Pantothenate synthetase (283 aa).

30–37 (MGNLHLGH) provides a ligand contact to ATP. Residue H37 is the Proton donor of the active site. Q61 serves as a coordination point for (R)-pantoate. Residue Q61 participates in beta-alanine binding. Residue 149–152 (GQKD) participates in ATP binding. Q155 is a binding site for (R)-pantoate. ATP is bound by residues I178 and 186 to 189 (MSSR).

This sequence belongs to the pantothenate synthetase family. In terms of assembly, homodimer.

It is found in the cytoplasm. The catalysed reaction is (R)-pantoate + beta-alanine + ATP = (R)-pantothenate + AMP + diphosphate + H(+). It participates in cofactor biosynthesis; (R)-pantothenate biosynthesis; (R)-pantothenate from (R)-pantoate and beta-alanine: step 1/1. In terms of biological role, catalyzes the condensation of pantoate with beta-alanine in an ATP-dependent reaction via a pantoyl-adenylate intermediate. In Shewanella pealeana (strain ATCC 700345 / ANG-SQ1), this protein is Pantothenate synthetase.